The sequence spans 134 residues: Small ribosomal subunit protein uS11 (134 aa).

This sequence belongs to the universal ribosomal protein uS11 family. Part of the 30S ribosomal subunit. Interacts with proteins S7 and S18. Binds to IF-3.

Functionally, located on the platform of the 30S subunit, it bridges several disparate RNA helices of the 16S rRNA. Forms part of the Shine-Dalgarno cleft in the 70S ribosome. In Frankia casuarinae (strain DSM 45818 / CECT 9043 / HFP020203 / CcI3), this protein is Small ribosomal subunit protein uS11.